The following is a 109-amino-acid chain: Enhancer of rudimentary homolog (109 aa).

It belongs to the E(R) family. In terms of assembly, homodimer.

Functionally, may have a role in the cell cycle. The sequence is that of Enhancer of rudimentary homolog from Arabidopsis thaliana (Mouse-ear cress).